Consider the following 469-residue polypeptide: MSEPLYAPRTPIFPRQISGAFRTAKWWILAVSLGIYLLTPWLRWDRGPNLPDQAVLIDIAGRRFFLFGIQIWPHEFYFVAGLLIMAGLGLFLFTSAAGRVWCGYACPQTVWTDLFLLVERRIEGDRNAQIRLHRQAWTAEKVWKRLLKWSVWAAISLLTGGAWVFYFADAPTLLNGLVTLTAHPVAWITIFVLTATTFVFAGFMREQICIYACPWPRIQAALMDEETITVAYRDWRGEPRGKRSETGRGDCIDCMACVNVCPMGIDIREGQQMACITCGLCIDACDDTMDRIGRPRGLIGYLALSDEHLERAGDTPKPAWRRLFRLRTSLYAVLWAGVGVTLIAALLLRPAVDLAVTPVRNPLFVTLSDGSIRNAYELRLRNMSGEDRRFRLAVDGSAGLRPSIEGSAGLDVPVAANATGLVRLYLTAPQGSDPATGALTDLRIRLDDAGGPEGGPVAAVKAAFHGARS.

At 1–23 the chain is on the cytoplasmic side; the sequence is MSEPLYAPRTPIFPRQISGAFRT. The helical transmembrane segment at 24-44 threads the bilayer; sequence AKWWILAVSLGIYLLTPWLRW. Residues 45–75 lie on the Periplasmic side of the membrane; that stretch reads DRGPNLPDQAVLIDIAGRRFFLFGIQIWPHE. The helical transmembrane segment at 76 to 96 threads the bilayer; that stretch reads FYFVAGLLIMAGLGLFLFTSA. The Cytoplasmic segment spans residues 97 to 149; the sequence is AGRVWCGYACPQTVWTDLFLLVERRIEGDRNAQIRLHRQAWTAEKVWKRLLKW. A helical membrane pass occupies residues 150 to 170; it reads SVWAAISLLTGGAWVFYFADA. Residues 171 to 183 lie on the Periplasmic side of the membrane; it reads PTLLNGLVTLTAH. Residues 184–204 traverse the membrane as a helical segment; that stretch reads PVAWITIFVLTATTFVFAGFM. Residues 205–327 are Cytoplasmic-facing; it reads REQICIYACP…PAWRRLFRLR (123 aa). 4Fe-4S ferredoxin-type domains lie at 242–270 and 266–295; these read KRSE…IREG and DIRE…IGRP. [4Fe-4S] cluster contacts are provided by Cys251, Cys254, Cys257, Cys261, Cys275, Cys278, Cys281, and Cys285. The helical transmembrane segment at 328 to 348 threads the bilayer; it reads TSLYAVLWAGVGVTLIAALLL. The Periplasmic segment spans residues 349 to 469; the sequence is RPAVDLAVTP…VKAAFHGARS (121 aa).

It is found in the cell membrane. Predicted to be involved in a redox process. The protein is Protein RdxA (rdxA) of Cereibacter sphaeroides (strain ATCC 17023 / DSM 158 / JCM 6121 / CCUG 31486 / LMG 2827 / NBRC 12203 / NCIMB 8253 / ATH 2.4.1.) (Rhodobacter sphaeroides).